The sequence spans 331 residues: Ferredoxin--NADP reductase 2 (331 aa).

Residues E37, Q45, Y50, V90, F124, D286, and T327 each contribute to the FAD site.

It belongs to the ferredoxin--NADP reductase type 2 family. In terms of assembly, homodimer. FAD serves as cofactor.

The enzyme catalyses 2 reduced [2Fe-2S]-[ferredoxin] + NADP(+) + H(+) = 2 oxidized [2Fe-2S]-[ferredoxin] + NADPH. This Listeria welshimeri serovar 6b (strain ATCC 35897 / DSM 20650 / CCUG 15529 / CIP 8149 / NCTC 11857 / SLCC 5334 / V8) protein is Ferredoxin--NADP reductase 2.